Reading from the N-terminus, the 228-residue chain is Elongation factor 1-beta (228 aa).

Positions Ala74 to Ala116 are disordered. An igE-binding region spans residues Glu84 to Lys93. Residues Ala97–Pro115 show a composition bias toward acidic residues.

Belongs to the EF-1-beta/EF-1-delta family. As to quaternary structure, EF-1 is composed of 4 subunits: alpha, beta, delta, and gamma.

In terms of biological role, EF-1-beta and EF-1-delta stimulate the exchange of GDP bound to EF-1-alpha to GTP. The chain is Elongation factor 1-beta from Penicillium citrinum.